A 213-amino-acid polypeptide reads, in one-letter code: MQAYQRDFIRFAIERGVLRFGEFTLKSGRTSPYFFNAGLFDSGLALARLGRFYAEAVIDSGIDFDVLFGPAYKGIPLAATTAVALAEQHQRDLPWCFNRKEAKDHGEGGTLVGAPLSGRVLIIDDVITAGTAIREVMQIIDAQGARAAGVLIALNRQERGKGELSAIQEVERDFGMPVVSIVSLEQVLEYLAEDAELKKHLPAVEAYRAQYGI.

Residue Lys26 coordinates 5-phospho-alpha-D-ribose 1-diphosphate. Residue 34–35 participates in orotate binding; the sequence is FF. 5-phospho-alpha-D-ribose 1-diphosphate contacts are provided by residues 72–73, Arg99, Lys100, Lys103, His105, and 124–132; these read YK and DDVITAGTA. Positions 128 and 156 each coordinate orotate.

Belongs to the purine/pyrimidine phosphoribosyltransferase family. PyrE subfamily. Homodimer. It depends on Mg(2+) as a cofactor.

It carries out the reaction orotidine 5'-phosphate + diphosphate = orotate + 5-phospho-alpha-D-ribose 1-diphosphate. It functions in the pathway pyrimidine metabolism; UMP biosynthesis via de novo pathway; UMP from orotate: step 1/2. Catalyzes the transfer of a ribosyl phosphate group from 5-phosphoribose 1-diphosphate to orotate, leading to the formation of orotidine monophosphate (OMP). This Pseudomonas aeruginosa (strain UCBPP-PA14) protein is Orotate phosphoribosyltransferase.